Consider the following 193-residue polypeptide: Probable DNA-directed RNA polymerase subunit delta (193 aa).

In terms of domain architecture, HTH HARE-type spans 14–81; the sequence is LALVEIATAI…GNNEWGLRAW (68 aa). Composition is skewed to acidic residues over residues 119-174 and 182-193; these read DDDV…DDNL and DLDDLSDGDIEK. The interval 119 to 193 is disordered; the sequence is DDDVIDYNDD…DDLSDGDIEK (75 aa).

The protein belongs to the RpoE family. In terms of assembly, RNAP is composed of a core of 2 alpha, a beta and a beta' subunits. The core is associated with a delta subunit and one of several sigma factors.

In terms of biological role, participates in both the initiation and recycling phases of transcription. In the presence of the delta subunit, RNAP displays an increased specificity of transcription, a decreased affinity for nucleic acids, and an increased efficiency of RNA synthesis because of enhanced recycling. The chain is Probable DNA-directed RNA polymerase subunit delta from Leuconostoc citreum (strain KM20).